The primary structure comprises 384 residues: UPF0284 protein alr0297 (384 aa).

The protein belongs to the UPF0284 family.

The chain is UPF0284 protein alr0297 from Nostoc sp. (strain PCC 7120 / SAG 25.82 / UTEX 2576).